We begin with the raw amino-acid sequence, 275 residues long: Large ribosomal subunit protein uL2 (275 aa).

Disordered regions lie at residues 1 to 55 (MGIR…RHRG) and 218 to 275 (PHVR…RRRR). The span at 259 to 275 (TRNKKKASSRLIVRRRR) shows a compositional bias: basic residues.

Belongs to the universal ribosomal protein uL2 family. In terms of assembly, part of the 50S ribosomal subunit. Forms a bridge to the 30S subunit in the 70S ribosome.

In terms of biological role, one of the primary rRNA binding proteins. Required for association of the 30S and 50S subunits to form the 70S ribosome, for tRNA binding and peptide bond formation. It has been suggested to have peptidyltransferase activity; this is somewhat controversial. Makes several contacts with the 16S rRNA in the 70S ribosome. The polypeptide is Large ribosomal subunit protein uL2 (Crocosphaera subtropica (strain ATCC 51142 / BH68) (Cyanothece sp. (strain ATCC 51142))).